We begin with the raw amino-acid sequence, 334 residues long: Protein FAM50B (334 aa).

The residue at position 2 (A2) is an N-acetylalanine. Residues 122–175 (FTLDEEEGDQEDSRQAESAEAHSAGAKKNLGKNPDVDTSFLPDREREEEENRLR) are disordered. Composition is skewed to basic and acidic residues over residues 132–141 (EDSRQAESAE) and 163–175 (PDRE…NRLR).

It belongs to the FAM50 family. In terms of tissue distribution, widely expressed. Abundant in testis, where it is expressed in seminiferous tubules, not in the interstitium. At the cellular level, expressed in primary spermatocytes and round spermatids, but not detectable in spermatogonia, elongating spermatids, mature spermatozoa, Sertoli cells or Leydig cells.

This is Protein FAM50B (Fam50b) from Mus musculus (Mouse).